Consider the following 280-residue polypeptide: Phosphonoacetaldehyde hydrolase (280 aa).

Aspartate 20 serves as the catalytic Nucleophile. Mg(2+) is bound by residues aspartate 20 and alanine 22. The active-site Schiff-base intermediate with substrate is the lysine 61. Position 194 (aspartate 194) interacts with Mg(2+).

The protein belongs to the HAD-like hydrolase superfamily. PhnX family. In terms of assembly, homodimer. It depends on Mg(2+) as a cofactor.

The enzyme catalyses phosphonoacetaldehyde + H2O = acetaldehyde + phosphate + H(+). In terms of biological role, involved in phosphonate degradation. The chain is Phosphonoacetaldehyde hydrolase from Nitratidesulfovibrio vulgaris (strain DSM 19637 / Miyazaki F) (Desulfovibrio vulgaris).